Consider the following 158-residue polypeptide: Endoribonuclease YbeY (158 aa).

Zn(2+) contacts are provided by H117, H121, and H127.

The protein belongs to the endoribonuclease YbeY family. Zn(2+) is required as a cofactor.

It localises to the cytoplasm. In terms of biological role, single strand-specific metallo-endoribonuclease involved in late-stage 70S ribosome quality control and in maturation of the 3' terminus of the 16S rRNA. This chain is Endoribonuclease YbeY, found in Psychromonas ingrahamii (strain DSM 17664 / CCUG 51855 / 37).